Here is a 111-residue protein sequence, read N- to C-terminus: Phosphoribosyl-ATP pyrophosphatase (111 aa).

Belongs to the PRA-PH family.

It localises to the cytoplasm. The catalysed reaction is 1-(5-phospho-beta-D-ribosyl)-ATP + H2O = 1-(5-phospho-beta-D-ribosyl)-5'-AMP + diphosphate + H(+). Its pathway is amino-acid biosynthesis; L-histidine biosynthesis; L-histidine from 5-phospho-alpha-D-ribose 1-diphosphate: step 2/9. The protein is Phosphoribosyl-ATP pyrophosphatase of Pseudomonas putida (strain W619).